The chain runs to 172 residues: Adenine phosphoribosyltransferase (172 aa).

It belongs to the purine/pyrimidine phosphoribosyltransferase family. In terms of assembly, homodimer.

The protein resides in the cytoplasm. The enzyme catalyses AMP + diphosphate = 5-phospho-alpha-D-ribose 1-diphosphate + adenine. The protein operates within purine metabolism; AMP biosynthesis via salvage pathway; AMP from adenine: step 1/1. In terms of biological role, catalyzes a salvage reaction resulting in the formation of AMP, that is energically less costly than de novo synthesis. The polypeptide is Adenine phosphoribosyltransferase (Streptococcus pyogenes serotype M12 (strain MGAS9429)).